Consider the following 72-residue polypeptide: Translation initiation factor IF-1 (72 aa).

An S1-like domain is found at 1–72 (MAKTDLLEVQ…ERGRIVFRHK (72 aa)).

The protein belongs to the IF-1 family. Component of the 30S ribosomal translation pre-initiation complex which assembles on the 30S ribosome in the order IF-2 and IF-3, IF-1 and N-formylmethionyl-tRNA(fMet); mRNA recruitment can occur at any time during PIC assembly.

It localises to the cytoplasm. Its function is as follows. One of the essential components for the initiation of protein synthesis. Stabilizes the binding of IF-2 and IF-3 on the 30S subunit to which N-formylmethionyl-tRNA(fMet) subsequently binds. Helps modulate mRNA selection, yielding the 30S pre-initiation complex (PIC). Upon addition of the 50S ribosomal subunit IF-1, IF-2 and IF-3 are released leaving the mature 70S translation initiation complex. This chain is Translation initiation factor IF-1, found in Spiroplasma kunkelii.